The primary structure comprises 265 residues: uncharacterized protein (265 aa).

Residues 1-20 (MSRAMALFFVLCWIQDEIVL) form the signal peptide. The chain crosses the membrane as a helical span at residues 192–212 (IIAAVSGVAILMAIVLLLLGL).

The protein resides in the membrane. This is an uncharacterized protein from Homo sapiens (Human).